The primary structure comprises 349 residues: Merozoite surface protein P38 (349 aa).

The signal sequence occupies residues 1-21 (MKRWSIITGIVIIFCILTCKG). 2 consecutive 6-Cys domains span residues 22–149 (QVEN…ISNG) and 153–301 (KIPG…YLTN). 4 cysteine pairs are disulfide-bonded: Cys-77–Cys-127, Cys-157–Cys-183, Cys-197–Cys-278, and Cys-208–Cys-276. 3 N-linked (GlcNAc...) asparagine glycosylation sites follow: Asn-294, Asn-295, and Asn-301. The GPI-anchor amidated asparagine moiety is linked to residue Asn-315. Positions 316-349 (SEIFERIEREEISFAFSSYLSITLILLYLFFLNF) are cleaved as a propeptide — removed in mature form.

The protein resides in the cell surface. It is found in the cell membrane. The sequence is that of Merozoite surface protein P38 (PFS38) from Plasmodium falciparum (isolate 3D7).